Consider the following 178-residue polypeptide: Chorion class high-cysteine HCB protein 13 (178 aa).

Positions 1 to 21 (MAAKLILFVCAIALVAQSVLG) are cleaved as a signal peptide. The segment at 22–46 (TGCGCCCRGCGCGCGGCGSRCCDRF) is left arm. The tract at residues 47–110 (CLCSNSAAPT…GDGCVGITQS (64 aa)) is central domain. The tract at residues 111–178 (CGGCGCGCGG…GCGCGGCGCC (68 aa)) is right arm (Gly-rich tandem repeats).

Belongs to the chorion protein family.

Functionally, this protein is one of many from the eggshell of the silk moth. This Bombyx mori (Silk moth) protein is Chorion class high-cysteine HCB protein 13.